The primary structure comprises 417 residues: Phosphoglycerate kinase 1 (417 aa).

Serine 2 is subject to N-acetylserine. Residues serine 2 and serine 4 each carry the phosphoserine modification. Lysine 6 bears the N6-succinyllysine mark. Position 11 is an N6-acetyllysine (lysine 11). Residues valine 23, aspartate 24, phenylalanine 25, asparagine 26, glutamine 38, and arginine 39 each contribute to the (2R)-3-phosphoglycerate site. The tract at residues 38 to 43 is mitochondrial targeting region exposed following cis-trans isomerization by PIN1 and recognized by the TOM complex for mitochondrial translocation of the protein; sequence QRIKAA. Residue lysine 48 is modified to N6-acetyllysine; alternate. Lysine 48 carries the post-translational modification N6-succinyllysine; alternate. 4 residues coordinate (2R)-3-phosphoglycerate: serine 62, histidine 63, glycine 65, and arginine 66. Lysine 75 carries the N6-acetyllysine modification. Phosphotyrosine is present on tyrosine 76. An N6-acetyllysine mark is found at lysine 86 and lysine 91. Lysine 97 is subject to N6-acetyllysine; alternate. Lysine 97 is subject to N6-(2-hydroxyisobutyryl)lysine; alternate. 2 residues coordinate (2R)-3-phosphoglycerate: leucine 122 and arginine 123. Lysine 131 is modified (N6-acetyllysine; alternate). Lysine 131 carries the post-translational modification N6-malonyllysine; alternate. N6-acetyllysine is present on lysine 146. 2 residues coordinate (2R)-3-phosphoglycerate: histidine 170 and arginine 171. Lysine 191 carries the post-translational modification N6-succinyllysine. Tyrosine 196 carries the post-translational modification Phosphotyrosine. Lysine 199 carries the N6-acetyllysine modification. Serine 203 bears the Phosphoserine mark. Residue glycine 214 participates in ADP binding. Residue glycine 214 coordinates CDP. 2 residues coordinate AMP: alanine 215 and lysine 216. Alanine 215 lines the ATP pocket. Residue alanine 215 coordinates Mg(2+). Lysine 216 bears the N6-(2-hydroxyisobutyryl)lysine mark. Positions 218 and 219 each coordinate Mg(2+). Aspartate 219 lines the CDP pocket. Lysine 220 is a binding site for AMP. Lysine 220 provides a ligand contact to ATP. N6-(2-hydroxyisobutyryl)lysine is present on lysine 220. Glycine 238 contributes to the ADP binding site. Position 238 (glycine 238) interacts with CDP. Position 239 (glycine 239) interacts with AMP. Residue glycine 239 coordinates ATP. N6-acetyllysine is present on residues lysine 267 and lysine 291. Glycine 313 provides a ligand contact to AMP. Glycine 313 serves as a coordination point for ATP. Lysine 323 bears the N6-(2-hydroxyisobutyryl)lysine mark. CDP is bound by residues glycine 338, valine 340, and phenylalanine 343. ADP is bound at residue phenylalanine 343. Glutamate 344 is an AMP binding site. Glutamate 344 contacts ATP. The residue at position 361 (lysine 361) is an N6-acetyllysine. Positions 375 and 376 each coordinate ATP. Residue aspartate 375 participates in Mg(2+) binding.

This sequence belongs to the phosphoglycerate kinase family. Monomer. Interacts with kinase MAPK1/ERK2; the interaction is direct, occurs under hypoxic conditions, and promotes its interaction with PIN1. Interacts with peptidyl-prolyl cis-trans isomerase PIN1; the interaction is direct, occurs under hypoxic conditions, and targets the protein to the mitochondrion by promoting interactions with the TOM complex. Interacts with mitochondrial circRNA mcPGK1 (via its 2nd stem-loop); the interaction is direct and targets the protein to the mitochondrion by promoting interactions with the TOM complex. Interacts with pyruvate dehydrogenase kinase PDK1; the interaction is direct, occurs under hypoxic conditions and leads to PDK1-mediated inhibition of pyruvate dehydrogenase complex activity. Requires Mg(2+) as cofactor. In terms of processing, phosphorylated at Ser-203 by MAPK1/ERK2 under hypoxic conditions, which promotes its mitochondrial targeting. As to expression, testis, lung, brain, skeletal muscle, liver, intestine, and kidney (at protein level).

It localises to the cytoplasm. It is found in the cytosol. The protein resides in the mitochondrion matrix. It carries out the reaction (2R)-3-phosphoglycerate + ATP = (2R)-3-phospho-glyceroyl phosphate + ADP. The catalysed reaction is L-seryl-[protein] + ATP = O-phospho-L-seryl-[protein] + ADP + H(+). It participates in carbohydrate degradation; glycolysis; pyruvate from D-glyceraldehyde 3-phosphate: step 2/5. Functionally, catalyzes one of the two ATP producing reactions in the glycolytic pathway via the reversible conversion of 1,3-diphosphoglycerate to 3-phosphoglycerate. Both L- and D- forms of purine and pyrimidine nucleotides can be used as substrates, but the activity is much lower on pyrimidines. In addition to its role as a glycolytic enzyme, it seems that PGK-1 acts as a polymerase alpha cofactor protein (primer recognition protein). Acts as a protein kinase when localized to the mitochondrion where it phosphorylates pyruvate dehydrogenase kinase PDK1 to inhibit pyruvate dehydrogenase complex activity and suppress the formation of acetyl-coenzyme A from pyruvate, and consequently inhibit oxidative phosphorylation and promote glycolysis. May play a role in sperm motility. This Mus musculus (Mouse) protein is Phosphoglycerate kinase 1 (Pgk1).